Here is a 236-residue protein sequence, read N- to C-terminus: Phosphatidylserine decarboxylase proenzyme (236 aa).

The active-site Schiff-base intermediate with substrate; via pyruvic acid is Ser-194. A Pyruvic acid (Ser); by autocatalysis modification is found at Ser-194.

The protein belongs to the phosphatidylserine decarboxylase family. PSD-A subfamily. In terms of assembly, heterodimer of a large membrane-associated beta subunit and a small pyruvoyl-containing alpha subunit. Requires pyruvate as cofactor. Is synthesized initially as an inactive proenzyme. Formation of the active enzyme involves a self-maturation process in which the active site pyruvoyl group is generated from an internal serine residue via an autocatalytic post-translational modification. Two non-identical subunits are generated from the proenzyme in this reaction, and the pyruvate is formed at the N-terminus of the alpha chain, which is derived from the carboxyl end of the proenzyme. The post-translation cleavage follows an unusual pathway, termed non-hydrolytic serinolysis, in which the side chain hydroxyl group of the serine supplies its oxygen atom to form the C-terminus of the beta chain, while the remainder of the serine residue undergoes an oxidative deamination to produce ammonia and the pyruvoyl prosthetic group on the alpha chain.

The protein resides in the cell membrane. The catalysed reaction is a 1,2-diacyl-sn-glycero-3-phospho-L-serine + H(+) = a 1,2-diacyl-sn-glycero-3-phosphoethanolamine + CO2. It functions in the pathway phospholipid metabolism; phosphatidylethanolamine biosynthesis; phosphatidylethanolamine from CDP-diacylglycerol: step 2/2. Catalyzes the formation of phosphatidylethanolamine (PtdEtn) from phosphatidylserine (PtdSer). The protein is Phosphatidylserine decarboxylase proenzyme of Rhodospirillum rubrum (strain ATCC 11170 / ATH 1.1.1 / DSM 467 / LMG 4362 / NCIMB 8255 / S1).